A 340-amino-acid chain; its full sequence is MVSSQPKYDLIREVGRGSYGVVYEAVIRKTSARVAVKKIRCHAPENVELALREFWALSSIKSQHPNVIHLEECILQKDGMVQKMSHGSNSSLYLQLVETSLKGEIAFDPRSAYYLWFVMDFCDGGDMNEYLLSRKPNRKTNTSFMLQLSSALAFLHKNQIIHRDLKPDNILISQTRLDTSDLEPTLKVADGLSKVCSASGQNPEEPVSVNKCFLSTACGTDFYMAPEVWEGHYTAKADIFALGIIIWAMLERITFIDTETKKELLGSYVKQGTEIVPVGEALLENPKMELLIPVKKKSMNGRMKQLIKEMLAANPQDRPDAFELELRLVQIAFKDSSWET.

Positions 8 to 333 constitute a Protein kinase domain; that stretch reads YDLIREVGRG…LELRLVQIAF (326 aa). ATP-binding positions include 14-22 and K37; that span reads VGRGSYGVV. The active-site Proton acceptor is D164.

It belongs to the protein kinase superfamily. Ser/Thr protein kinase family.

The protein resides in the nucleus. It catalyses the reaction L-seryl-[protein] + ATP = O-phospho-L-seryl-[protein] + ADP + H(+). The enzyme catalyses L-threonyl-[protein] + ATP = O-phospho-L-threonyl-[protein] + ADP + H(+). The polypeptide is Serine/threonine-protein kinase PDIK1L (PDIK1L) (Pongo abelii (Sumatran orangutan)).